Consider the following 556-residue polypeptide: Arginine--tRNA ligase (556 aa).

The 'HIGH' region signature appears at 132–142 (ANPTGNLHLGH).

The protein belongs to the class-I aminoacyl-tRNA synthetase family. As to quaternary structure, monomer.

Its subcellular location is the cytoplasm. The catalysed reaction is tRNA(Arg) + L-arginine + ATP = L-arginyl-tRNA(Arg) + AMP + diphosphate. This is Arginine--tRNA ligase from Bacillus licheniformis (strain ATCC 14580 / DSM 13 / JCM 2505 / CCUG 7422 / NBRC 12200 / NCIMB 9375 / NCTC 10341 / NRRL NRS-1264 / Gibson 46).